A 447-amino-acid polypeptide reads, in one-letter code: Protein odr-4 homolog (447 aa).

2 helical membrane passes run 82–102 (MLPG…ELAD) and 425–445 (IGVI…FHYF).

Belongs to the ODR-4 family. Ubiquitously expressed.

It localises to the membrane. Functionally, may play a role in the trafficking of a subset of G-protein coupled receptors. The chain is Protein odr-4 homolog (Odr4) from Mus musculus (Mouse).